The chain runs to 174 residues: Superoxide dismutase [Cu-Zn] (174 aa).

A signal peptide spans 1–20 (MMKSLFIASTMVLMAFPAFA). Cu cation contacts are provided by His-68, His-70, and His-93. Cys-75 and Cys-170 form a disulfide bridge. His-93, His-102, His-110, and Asp-113 together coordinate Zn(2+). Residue His-148 participates in Cu cation binding.

The protein belongs to the Cu-Zn superoxide dismutase family. Homodimer. The cofactor is Cu cation. Zn(2+) is required as a cofactor.

Its subcellular location is the periplasm. The catalysed reaction is 2 superoxide + 2 H(+) = H2O2 + O2. Functionally, destroys radicals which are normally produced within the cells and which are toxic to biological systems. The sequence is that of Superoxide dismutase [Cu-Zn] (sodC) from Brucella melitensis biotype 1 (strain ATCC 23456 / CCUG 17765 / NCTC 10094 / 16M).